Here is a 178-residue protein sequence, read N- to C-terminus: Large ribosomal subunit protein uL16 (178 aa).

The protein belongs to the universal ribosomal protein uL16 family.

The protein is Large ribosomal subunit protein uL16 of Saccharolobus solfataricus (strain ATCC 35092 / DSM 1617 / JCM 11322 / P2) (Sulfolobus solfataricus).